The chain runs to 212 residues: Peptide methionine sulfoxide reductase MsrA (212 aa).

The active site involves Cys52.

It belongs to the MsrA Met sulfoxide reductase family.

It carries out the reaction L-methionyl-[protein] + [thioredoxin]-disulfide + H2O = L-methionyl-(S)-S-oxide-[protein] + [thioredoxin]-dithiol. The catalysed reaction is [thioredoxin]-disulfide + L-methionine + H2O = L-methionine (S)-S-oxide + [thioredoxin]-dithiol. Has an important function as a repair enzyme for proteins that have been inactivated by oxidation. Catalyzes the reversible oxidation-reduction of methionine sulfoxide in proteins to methionine. The protein is Peptide methionine sulfoxide reductase MsrA of Salmonella choleraesuis (strain SC-B67).